A 176-amino-acid chain; its full sequence is Large ribosomal subunit protein uL6 (176 aa).

Belongs to the universal ribosomal protein uL6 family. In terms of assembly, part of the 50S ribosomal subunit.

Functionally, this protein binds to the 23S rRNA, and is important in its secondary structure. It is located near the subunit interface in the base of the L7/L12 stalk, and near the tRNA binding site of the peptidyltransferase center. The protein is Large ribosomal subunit protein uL6 of Shewanella sediminis (strain HAW-EB3).